We begin with the raw amino-acid sequence, 67 residues long: MDIVKFESESSQGLHELLVNLRKEFVNLAFQKKLGQCNNFSRFSLIRKSIARSLTVLNRRKREGKNA.

It belongs to the universal ribosomal protein uL29 family.

In Wolbachia pipientis subsp. Culex pipiens (strain wPip), this protein is Large ribosomal subunit protein uL29.